We begin with the raw amino-acid sequence, 97 residues long: Large ribosomal subunit protein bL27 (97 aa).

The propeptide occupies 1-12 (MLKMNLANLQLF). A disordered region spans residues 14–38 (HKKGGGSTSNGRDSESKRLGAKAAD).

It belongs to the bacterial ribosomal protein bL27 family. Post-translationally, the N-terminus is cleaved by ribosomal processing cysteine protease Prp.

The sequence is that of Large ribosomal subunit protein bL27 from Streptococcus mutans serotype c (strain ATCC 700610 / UA159).